The following is a 194-amino-acid chain: Peptidyl-tRNA hydrolase (194 aa).

Y17 is a binding site for tRNA. The active-site Proton acceptor is H22. TRNA contacts are provided by Y69, N71, and N117.

This sequence belongs to the PTH family. As to quaternary structure, monomer.

The protein localises to the cytoplasm. The enzyme catalyses an N-acyl-L-alpha-aminoacyl-tRNA + H2O = an N-acyl-L-amino acid + a tRNA + H(+). Hydrolyzes ribosome-free peptidyl-tRNAs (with 1 or more amino acids incorporated), which drop off the ribosome during protein synthesis, or as a result of ribosome stalling. In terms of biological role, catalyzes the release of premature peptidyl moieties from peptidyl-tRNA molecules trapped in stalled 50S ribosomal subunits, and thus maintains levels of free tRNAs and 50S ribosomes. The protein is Peptidyl-tRNA hydrolase of Paenarthrobacter aurescens (strain TC1).